Reading from the N-terminus, the 117-residue chain is UPF0295 protein Bsph_0336 (117 aa).

2 consecutive transmembrane segments (helical) span residues 13-33 (SFALALIFIGFIVMYGGIFFK) and 37-57 (ILVLIFMTLGVLCIIGSTVVY).

This sequence belongs to the UPF0295 family.

Its subcellular location is the cell membrane. This Lysinibacillus sphaericus (strain C3-41) protein is UPF0295 protein Bsph_0336.